Reading from the N-terminus, the 92-residue chain is Large ribosomal subunit protein uL24 (92 aa).

It belongs to the universal ribosomal protein uL24 family. In terms of assembly, part of the 50S ribosomal subunit.

Functionally, one of two assembly initiator proteins, it binds directly to the 5'-end of the 23S rRNA, where it nucleates assembly of the 50S subunit. In terms of biological role, one of the proteins that surrounds the polypeptide exit tunnel on the outside of the subunit. The sequence is that of Large ribosomal subunit protein uL24 from Opitutus terrae (strain DSM 11246 / JCM 15787 / PB90-1).